A 461-amino-acid chain; its full sequence is Steroidogenic factor 1 (461 aa).

The nuclear receptor DNA-binding region spans D10–A85. The NR C4-type zinc finger occupies C13 to C33. N6-acetyllysine is present on residues K34, K38, and K72. An NR C4-type zinc finger spans residues C49–C73. A Glycyl lysine isopeptide (Lys-Gly) (interchain with G-Cter in SUMO) cross-link involves residue K119. Residues K119–K150 are disordered. Residues G127–M139 are compositionally biased toward pro residues. A Glycyl lysine isopeptide (Lys-Gly) (interchain with G-Cter in SUMO) cross-link involves residue K194. Residue S203 is modified to Phosphoserine; by CDK7. The region spanning G222–K459 is the NR LBD domain. The important for dimerization stretch occupies residues L230–T461. Residues G341, Y436, and K440 each coordinate a 1,2-diacyl-sn-glycero-3-phosphocholine.

The protein belongs to the nuclear hormone receptor family. NR5 subfamily. Binds DNA as a monomer. Part of a complex consisting of SFPQ, NONO and NR5A1. Interacts with NR0B2, NCOA2 and PPARGC1A. Interacts with DGKQ and CDK7. Binds to and activated by HIPK3. In terms of processing, acetylation stimulates the transcriptional activity. Post-translationally, sumoylation reduces CDK7-mediated phosphorylation on Ser-203. Phosphorylated on Ser-203 by CDK7. This phosphorylation promotes transcriptional activity.

It is found in the nucleus. Functionally, transcriptional activator. Seems to be essential for sexual differentiation and formation of the primary steroidogenic tissues. Binds to the Ad4 site found in the promoter region of steroidogenic P450 genes such as CYP11A, CYP11B and CYP21B. Also regulates the AMH/Muellerian inhibiting substance gene as well as the AHCH and STAR genes. 5'-YCAAGGYC-3' and 5'-RRAGGTCA-3' are the consensus sequences for the recognition by NR5A1. The SFPQ-NONO-NR5A1 complex binds to the CYP17 promoter and regulates basal and cAMP-dependent transcriptional activity. Binds phosphatidylcholine and phospholipids with a phosphatidylinositol (PI) headgroup, in particular PI(3,4)P2 and PI(3,4,5)P3. Activated by the phosphorylation of NR5A1 by HIPK3 leading to increased steroidogenic gene expression upon cAMP signaling pathway stimulation. The protein is Steroidogenic factor 1 (NR5A1) of Sus scrofa (Pig).